Here is an 83-residue protein sequence, read N- to C-terminus: MESLGIGFSNLVNSNRIIAIVSPETNPIKRIVQKAKEDNNLIDVTFGRKTRSVIIMDSSHVVLSCLQPETLQMRLDKSNNKED.

This sequence belongs to the RemA family.

The protein is Putative regulatory protein FMG_0656 of Finegoldia magna (strain ATCC 29328 / DSM 20472 / WAL 2508) (Peptostreptococcus magnus).